The primary structure comprises 226 residues: ATP synthase F(0) complex subunit a (226 aa).

6 helical membrane-spanning segments follow: residues 6–26, 68–88, 97–117, 138–158, 164–184, and 189–209; these read FASF…IIMF, WTLM…LGLL, QLSM…ITGF, IPML…ALAV, ITAG…LMNI, and ATIT…VALI.

This sequence belongs to the ATPase A chain family. As to quaternary structure, component of the ATP synthase complex composed at least of ATP5F1A/subunit alpha, ATP5F1B/subunit beta, ATP5MC1/subunit c (homooctomer), MT-ATP6/subunit a, MT-ATP8/subunit 8, ATP5ME/subunit e, ATP5MF/subunit f, ATP5MG/subunit g, ATP5MK/subunit k, ATP5MJ/subunit j, ATP5F1C/subunit gamma, ATP5F1D/subunit delta, ATP5F1E/subunit epsilon, ATP5PF/subunit F6, ATP5PB/subunit b, ATP5PD/subunit d, ATP5PO/subunit OSCP. ATP synthase complex consists of a soluble F(1) head domain (subunits alpha(3) and beta(3)) - the catalytic core - and a membrane F(0) domain - the membrane proton channel (subunits c, a, 8, e, f, g, k and j). These two domains are linked by a central stalk (subunits gamma, delta, and epsilon) rotating inside the F1 region and a stationary peripheral stalk (subunits F6, b, d, and OSCP). Interacts with DNAJC30; interaction is direct.

The protein resides in the mitochondrion inner membrane. It catalyses the reaction H(+)(in) = H(+)(out). Functionally, subunit a, of the mitochondrial membrane ATP synthase complex (F(1)F(0) ATP synthase or Complex V) that produces ATP from ADP in the presence of a proton gradient across the membrane which is generated by electron transport complexes of the respiratory chain. ATP synthase complex consist of a soluble F(1) head domain - the catalytic core - and a membrane F(1) domain - the membrane proton channel. These two domains are linked by a central stalk rotating inside the F(1) region and a stationary peripheral stalk. During catalysis, ATP synthesis in the catalytic domain of F(1) is coupled via a rotary mechanism of the central stalk subunits to proton translocation. With the subunit c (ATP5MC1), forms the proton-conducting channel in the F(0) domain, that contains two crucial half-channels (inlet and outlet) that facilitate proton movement from the mitochondrial intermembrane space (IMS) into the matrix. Protons are taken up via the inlet half-channel and released through the outlet half-channel, following a Grotthuss mechanism. The polypeptide is ATP synthase F(0) complex subunit a (Mus musculus (Mouse)).